The sequence spans 79 residues: Translational regulator CsrA (79 aa).

Belongs to the CsrA/RsmA family. Homodimer; the beta-strands of each monomer intercalate to form a hydrophobic core, while the alpha-helices form wings that extend away from the core.

It is found in the cytoplasm. Functionally, a translational regulator that binds mRNA to regulate translation initiation and/or mRNA stability. Usually binds in the 5'-UTR at or near the Shine-Dalgarno sequence preventing ribosome-binding, thus repressing translation. Its main target seems to be the major flagellin gene, while its function is anatagonized by FliW. The chain is Translational regulator CsrA from Geotalea uraniireducens (strain Rf4) (Geobacter uraniireducens).